Consider the following 253-residue polypeptide: uncharacterized protein (253 aa).

Residues 62 to 78 form a helical membrane-spanning segment; sequence WCSIGWSIGALIIFLVY. Residues 141-158 are compositionally biased toward low complexity; the sequence is TTPQTTTPEIPSSTEPQE. A disordered region spans residues 141 to 225; it reads TTPQTTTPEI…HDNQPLEERH (85 aa). The segment covering 200–216 has biased composition (acidic residues); the sequence is NVEDEPPPNKPEEEEDH.

It is found in the host membrane. This is an uncharacterized protein from Aedes vexans (Inland floodwater mosquito).